Consider the following 120-residue polypeptide: Large ribosomal subunit protein bL12 (120 aa).

It belongs to the bacterial ribosomal protein bL12 family. In terms of assembly, homodimer. Part of the ribosomal stalk of the 50S ribosomal subunit. Forms a multimeric L10(L12)X complex, where L10 forms an elongated spine to which 2 to 4 L12 dimers bind in a sequential fashion. Binds GTP-bound translation factors.

Forms part of the ribosomal stalk which helps the ribosome interact with GTP-bound translation factors. Is thus essential for accurate translation. The protein is Large ribosomal subunit protein bL12 of Listeria monocytogenes serotype 4b (strain CLIP80459).